The chain runs to 281 residues: 33 kDa chaperonin (281 aa).

Cystine bridges form between cysteine 229/cysteine 231 and cysteine 262/cysteine 265.

The protein belongs to the HSP33 family. Under oxidizing conditions two disulfide bonds are formed involving the reactive cysteines. Under reducing conditions zinc is bound to the reactive cysteines and the protein is inactive.

The protein localises to the cytoplasm. Redox regulated molecular chaperone. Protects both thermally unfolding and oxidatively damaged proteins from irreversible aggregation. Plays an important role in the bacterial defense system toward oxidative stress. This chain is 33 kDa chaperonin, found in Pseudoalteromonas translucida (strain TAC 125).